The primary structure comprises 511 residues: Acetylcholine receptor subunit alpha-type unc-38 (511 aa).

The signal sequence occupies residues 1 to 16 (MRSFWLFLLLLLFCIS). Over 17-261 (FIKLTEGNED…QLRRKPLFYT (245 aa)) the chain is Extracellular. N-linked (GlcNAc...) asparagine glycosylation is present at Asn-124. Cys-151 and Cys-165 are oxidised to a cystine. N-linked (GlcNAc...) asparagine glycosylation occurs at Asn-202. Cysteines 238 and 239 form a disulfide. The next 3 membrane-spanning stretches (helical) occupy residues 262–282 (VNLV…FYLP), 291–311 (LCIS…EIIP), and 324–344 (LLFT…SLNL). Residues 345 to 464 (HFRTPTTHLM…WKYVAMVLDR (120 aa)) lie on the Cytoplasmic side of the membrane. Residues 465-485 (LFLLIFSIACFVGTVIILLRA) form a helical membrane-spanning segment.

This sequence belongs to the ligand-gated ion channel (TC 1.A.9) family. Acetylcholine receptor (TC 1.A.9.1) subfamily. In terms of assembly, component of nicotinic acetylcholine receptor. In muscles, composed of 2 non-alpha subunits lev-1 and unc-29, and 3 alpha subunits unc-38, unc-63 and lev-8. In cholinergic motoneurons, composed of 2 non-alpha subunits acr-2 and acr-3, and 3 alpha subunits unc-38, unc-63 and acr-12.

It is found in the postsynaptic cell membrane. The protein resides in the cell membrane. Its function is as follows. Alpha subunit of nicotinic acetylcholine receptor (nAChR). Probably acts in cholinergic motoneurons to regulate presynaptic neurotransmitter release, thereby ensuring normal level of excitation of cholinergic motoneurons during locomotion. Involved in nAChR sensitivity to nicotine. This is Acetylcholine receptor subunit alpha-type unc-38 (unc-38) from Caenorhabditis elegans.